Here is a 105-residue protein sequence, read N- to C-terminus: Heat shock protein HspQ (105 aa).

A disordered region spans residues 74-105 (SSETQDEHPEQPSMDELARTIRKQLQAPRLRN).

The protein belongs to the HspQ family.

The protein resides in the cytoplasm. Functionally, involved in the degradation of certain denaturated proteins, including DnaA, during heat shock stress. The chain is Heat shock protein HspQ from Citrobacter koseri (strain ATCC BAA-895 / CDC 4225-83 / SGSC4696).